Reading from the N-terminus, the 424-residue chain is Protein FAM43A (424 aa).

Positions 261–297 (QQEEELQEEEEEHLEDCLEEEEEEDGVGDGDPAEEEA) are enriched in acidic residues. Disordered stretches follow at residues 261–299 (QQEE…EAEA) and 382–424 (LLSG…PYSG). Positions 382 to 394 (LLSGESTGSESSI) are enriched in low complexity. Polar residues predominate over residues 405-418 (SPGNPSGPADSTSL).

The protein belongs to the FAM43 family.

In Mus musculus (Mouse), this protein is Protein FAM43A (Fam43a).